Here is a 138-residue protein sequence, read N- to C-terminus: Phospholipase A2 EC1 (138 aa).

The first 16 residues, 1 to 16 (MRTLWIVAVWLMSVEG), serve as a signal peptide directing secretion. 7 cysteine pairs are disulfide-bonded: Cys42-Cys131, Cys44-Cys60, Cys59-Cys111, Cys65-Cys138, Cys66-Cys104, Cys73-Cys97, and Cys91-Cys102. 3 residues coordinate Ca(2+): Tyr43, Gly45, and Gly47. The active site involves His63. Asp64 is a binding site for Ca(2+). Asp105 is a catalytic residue.

The protein belongs to the phospholipase A2 family. Group II subfamily. Ca(2+) serves as cofactor.

Its subcellular location is the secreted. It catalyses the reaction a 1,2-diacyl-sn-glycero-3-phosphocholine + H2O = a 1-acyl-sn-glycero-3-phosphocholine + a fatty acid + H(+). In Echis coloratus (Carpet viper), this protein is Phospholipase A2 EC1.